Here is a 105-residue protein sequence, read N- to C-terminus: Endogenous retrovirus group K member 6 Rec protein (105 aa).

The tract at residues 1–49 (MNPSEMQRKAPPRRRRHRNRAPLTHKMNKMVTSEEQMKLPSTKKAEPPT) is disordered. Residues 10–20 (APPRRRRHRNR) show a composition bias toward basic residues. The short motif at 13–20 (RRRRHRNR) is the Nuclear localization signal element. The short motif at 50–59 (WAQLKKLTQL) is the Nuclear export signal element.

In terms of assembly, forms homodimers, homotrimers, and homotetramers via a C-terminal domain. Associates with XPO1 and with ZNF145. Expressed at higher level in placenta, expressed at lower level in several organs and cell lines.

Its subcellular location is the cytoplasm. The protein localises to the nucleus. It is found in the nucleolus. Retroviral replication requires the nuclear export and translation of unspliced, singly-spliced and multiply-spliced derivatives of the initial genomic transcript. Rec interacts with a highly structured RNA element (RcRE) present in the viral 3'LTR and recruits the cellular nuclear export machinery. This permits export to the cytoplasm of unspliced genomic or incompletely spliced subgenomic viral transcripts. This chain is Endogenous retrovirus group K member 6 Rec protein (ERVK-6), found in Homo sapiens (Human).